Reading from the N-terminus, the 100-residue chain is Small ribosomal subunit protein bS6 (100 aa).

This sequence belongs to the bacterial ribosomal protein bS6 family.

In terms of biological role, binds together with bS18 to 16S ribosomal RNA. In Enterococcus faecalis (strain ATCC 700802 / V583), this protein is Small ribosomal subunit protein bS6.